The sequence spans 264 residues: uncharacterized protein (264 aa).

Residues 182-198 (TVTGVSNALGFIIAALL) form a helical membrane-spanning segment.

It to E.coli YjiC.

The protein resides in the membrane. This is an uncharacterized protein from Escherichia coli (strain K12).